Here is a 458-residue protein sequence, read N- to C-terminus: SLIT-ROBO Rho GTPase-activating protein 2B (458 aa).

One can recognise an F-BAR domain in the interval 22–324 (KEIRAQLTEQ…AVENLDATSD (303 aa)). Over residues 181-203 (LKEAEKQEEKQIGKSVKQEDRQT) the composition is skewed to basic and acidic residues. The segment at 181 to 214 (LKEAEKQEEKQIGKSVKQEDRQTPRSPDSTANVR) is disordered. A coiled-coil region spans residues 362-400 (QSELLQRCQQLQSRLSTLKIENEEVKKTMEATLQTIQDI).

In terms of assembly, may interact with SRGAP2; formation of the heterodimer alters SRGAP2 function.

Its function is as follows. May regulate cell migration and differentiation through interaction with and inhibition of SRGAP2. In contrast to SRGAP2C, it is not able to induce long-lasting changes in synaptic density throughout adulthood. This Homo sapiens (Human) protein is SLIT-ROBO Rho GTPase-activating protein 2B (SRGAP2B).